The sequence spans 429 residues: tRNA modification GTPase MnmE (429 aa).

3 residues coordinate (6S)-5-formyl-5,6,7,8-tetrahydrofolate: Arg-20, Glu-77, and Arg-117. Residues 213–353 enclose the TrmE-type G domain; it reads GFEVAILGAP…LVKAVSHRLS (141 aa). Asn-223 is a K(+) binding site. GTP contacts are provided by residues 223-228, 242-248, and 267-270; these read NVGKSS, SSIAGTT, and DTAG. Residue Ser-227 coordinates Mg(2+). Positions 242, 244, and 247 each coordinate K(+). Position 248 (Thr-248) interacts with Mg(2+). Lys-429 provides a ligand contact to (6S)-5-formyl-5,6,7,8-tetrahydrofolate.

It belongs to the TRAFAC class TrmE-Era-EngA-EngB-Septin-like GTPase superfamily. TrmE GTPase family. In terms of assembly, homodimer. Heterotetramer of two MnmE and two MnmG subunits. K(+) serves as cofactor.

It localises to the cytoplasm. Its function is as follows. Exhibits a very high intrinsic GTPase hydrolysis rate. Involved in the addition of a carboxymethylaminomethyl (cmnm) group at the wobble position (U34) of certain tRNAs, forming tRNA-cmnm(5)s(2)U34. This is tRNA modification GTPase MnmE from Dinoroseobacter shibae (strain DSM 16493 / NCIMB 14021 / DFL 12).